Reading from the N-terminus, the 119-residue chain is Large ribosomal subunit protein uL18 (119 aa).

The protein belongs to the universal ribosomal protein uL18 family. Part of the 50S ribosomal subunit; part of the 5S rRNA/L5/L18/L25 subcomplex. Contacts the 5S and 23S rRNAs.

Functionally, this is one of the proteins that bind and probably mediate the attachment of the 5S RNA into the large ribosomal subunit, where it forms part of the central protuberance. This chain is Large ribosomal subunit protein uL18, found in Dinoroseobacter shibae (strain DSM 16493 / NCIMB 14021 / DFL 12).